Here is a 319-residue protein sequence, read N- to C-terminus: Acetyl-coenzyme A carboxylase carboxyl transferase subunit alpha (319 aa).

The 255-residue stretch at 39-293 (RLQKKSNDLT…KAVLEKQLHE (255 aa)) folds into the CoA carboxyltransferase C-terminal domain.

This sequence belongs to the AccA family. In terms of assembly, acetyl-CoA carboxylase is a heterohexamer composed of biotin carboxyl carrier protein (AccB), biotin carboxylase (AccC) and two subunits each of ACCase subunit alpha (AccA) and ACCase subunit beta (AccD).

The protein resides in the cytoplasm. It catalyses the reaction N(6)-carboxybiotinyl-L-lysyl-[protein] + acetyl-CoA = N(6)-biotinyl-L-lysyl-[protein] + malonyl-CoA. Its pathway is lipid metabolism; malonyl-CoA biosynthesis; malonyl-CoA from acetyl-CoA: step 1/1. In terms of biological role, component of the acetyl coenzyme A carboxylase (ACC) complex. First, biotin carboxylase catalyzes the carboxylation of biotin on its carrier protein (BCCP) and then the CO(2) group is transferred by the carboxyltransferase to acetyl-CoA to form malonyl-CoA. The protein is Acetyl-coenzyme A carboxylase carboxyl transferase subunit alpha of Neisseria meningitidis serogroup B (strain ATCC BAA-335 / MC58).